Here is a 506-residue protein sequence, read N- to C-terminus: BTB/POZ domain-containing protein At3g22104 (506 aa).

The 71-residue stretch at 6 to 76 folds into the BTB domain; the sequence is SDLEVDINGE…CYNDGRVAVM (71 aa). An NPH3 domain is found at 187-435; sequence TWWFDEVLVL…LDEQQQQQQQ (249 aa). The stretch at 421–492 forms a coiled coil; the sequence is QAIETLDEQQ…MEVIKKRSKS (72 aa). The disordered stretch occupies residues 485 to 506; that stretch reads VIKKRSKSSSKGSNRSLPKLCS.

This sequence belongs to the NPH3 family.

Its pathway is protein modification; protein ubiquitination. In terms of biological role, may act as a substrate-specific adapter of an E3 ubiquitin-protein ligase complex (CUL3-RBX1-BTB) which mediates the ubiquitination and subsequent proteasomal degradation of target proteins. In Arabidopsis thaliana (Mouse-ear cress), this protein is BTB/POZ domain-containing protein At3g22104.